Reading from the N-terminus, the 309-residue chain is Peptide methionine sulfoxide reductase MsrA/MsrB (309 aa).

Residues 1–153 (MIYLAGGCFW…PNGYCHIDIN (153 aa)) form a peptide methionine sulfoxide reductase A region. The active site involves C8. Positions 170 to 293 (ATEIKEKLSA…NSLSITFIPK (124 aa)) constitute a MsrB domain. The active-site Nucleophile is the C282.

It in the N-terminal section; belongs to the MsrA Met sulfoxide reductase family. In the C-terminal section; belongs to the MsrB Met sulfoxide reductase family.

The enzyme catalyses L-methionyl-[protein] + [thioredoxin]-disulfide + H2O = L-methionyl-(S)-S-oxide-[protein] + [thioredoxin]-dithiol. The catalysed reaction is [thioredoxin]-disulfide + L-methionine + H2O = L-methionine (S)-S-oxide + [thioredoxin]-dithiol. It catalyses the reaction L-methionyl-[protein] + [thioredoxin]-disulfide + H2O = L-methionyl-(R)-S-oxide-[protein] + [thioredoxin]-dithiol. Functionally, has an important function as a repair enzyme for proteins that have been inactivated by oxidation. Catalyzes the reversible oxidation-reduction of methionine sulfoxide in proteins to methionine. This chain is Peptide methionine sulfoxide reductase MsrA/MsrB (msrAB), found in Streptococcus pyogenes serotype M18 (strain MGAS8232).